The following is a 235-amino-acid chain: tRNA1(Val) (adenine(37)-N6)-methyltransferase (235 aa).

Belongs to the methyltransferase superfamily. tRNA (adenine-N(6)-)-methyltransferase family.

It is found in the cytoplasm. It catalyses the reaction adenosine(37) in tRNA1(Val) + S-adenosyl-L-methionine = N(6)-methyladenosine(37) in tRNA1(Val) + S-adenosyl-L-homocysteine + H(+). Specifically methylates the adenine in position 37 of tRNA(1)(Val) (anticodon cmo5UAC). The chain is tRNA1(Val) (adenine(37)-N6)-methyltransferase from Glaesserella parasuis serovar 5 (strain SH0165) (Haemophilus parasuis).